Reading from the N-terminus, the 371-residue chain is Putative glutamate--cysteine ligase 2 (371 aa).

This sequence belongs to the glutamate--cysteine ligase type 2 family. YbdK subfamily.

It catalyses the reaction L-cysteine + L-glutamate + ATP = gamma-L-glutamyl-L-cysteine + ADP + phosphate + H(+). ATP-dependent carboxylate-amine ligase which exhibits weak glutamate--cysteine ligase activity. This is Putative glutamate--cysteine ligase 2 from Burkholderia cenocepacia (strain HI2424).